Reading from the N-terminus, the 103-residue chain is Flagellar hook-basal body complex protein FliE (103 aa).

Belongs to the FliE family.

The protein localises to the bacterial flagellum basal body. This chain is Flagellar hook-basal body complex protein FliE, found in Yersinia enterocolitica serotype O:8 / biotype 1B (strain NCTC 13174 / 8081).